Reading from the N-terminus, the 101-residue chain is Ubiquitin-related modifier 1 (101 aa).

Gly101 is modified (1-thioglycine). Gly101 participates in a covalent cross-link: Glycyl lysine isopeptide (Gly-Lys) (interchain with K-? in acceptor proteins).

The protein belongs to the URM1 family. Post-translationally, C-terminal thiocarboxylation occurs in 2 steps, it is first acyl-adenylated (-COAMP) via the hesA/moeB/thiF part of UBA4, then thiocarboxylated (-COSH) via the rhodanese domain of UBA4.

The protein localises to the cytoplasm. Its pathway is tRNA modification; 5-methoxycarbonylmethyl-2-thiouridine-tRNA biosynthesis. Its function is as follows. Acts as a sulfur carrier required for 2-thiolation of mcm(5)S(2)U at tRNA wobble positions of cytosolic tRNA(Lys), tRNA(Glu) and tRNA(Gln). Serves as sulfur donor in tRNA 2-thiolation reaction by being thiocarboxylated (-COSH) at its C-terminus by the MOCS3 homolog UBA4. The sulfur is then transferred to tRNA to form 2-thiolation of mcm(5)S(2)U. Prior mcm(5) tRNA modification by the elongator complex is required for 2-thiolation. Also acts as a ubiquitin-like protein (UBL) that is covalently conjugated via an isopeptide bond to lysine residues of target proteins such as AHP1. The thiocarboxylated form serves as substrate for conjugation and oxidative stress specifically induces the formation of UBL-protein conjugates. In Candida albicans (strain SC5314 / ATCC MYA-2876) (Yeast), this protein is Ubiquitin-related modifier 1.